Reading from the N-terminus, the 92-residue chain is Small ribosomal subunit protein uS19 (92 aa).

The protein belongs to the universal ribosomal protein uS19 family.

Protein S19 forms a complex with S13 that binds strongly to the 16S ribosomal RNA. The polypeptide is Small ribosomal subunit protein uS19 (Bacillus licheniformis (strain ATCC 14580 / DSM 13 / JCM 2505 / CCUG 7422 / NBRC 12200 / NCIMB 9375 / NCTC 10341 / NRRL NRS-1264 / Gibson 46)).